A 209-amino-acid polypeptide reads, in one-letter code: Casparian strip membrane protein 1 (209 aa).

The tract at residues 1-35 (MKTGESTAIDIAPETNNSGPIGKKKSTTPLLAAPV) is disordered. Topologically, residues 1 to 46 (MKTGESTAIDIAPETNNSGPIGKKKSTTPLLAAPVPDRGTHRMKRG) are cytoplasmic. The chain crosses the membrane as a helical span at residues 47–67 (LAIFDFVLRIGVLASALAAAA). At 68–96 (AMGTSEQTLPFFTQFFQFEASYDDLPTFQ) the chain is on the extracellular side. A helical transmembrane segment spans residues 97–117 (FFVVAMAVVAGYVVLSIPFSI). The Cytoplasmic segment spans residues 118–129 (VCIIRPHAAGPR). The chain crosses the membrane as a helical span at residues 130–150 (VLLLILDSVALTLNTAAAGAA). Residues 151 to 182 (AAVVSLAHSGNSSTNWLAICNQFGDFCQQASG) lie on the Extracellular side of the membrane. Asn161 carries N-linked (GlcNAc...) asparagine glycosylation. Residues 183-203 (AVVGSFAAVLLFLLLILFSAL) traverse the membrane as a helical segment. The Cytoplasmic portion of the chain corresponds to 204–209 (SLKNSH).

The protein belongs to the Casparian strip membrane proteins (CASP) family. As to quaternary structure, homodimer and heterodimers.

It localises to the cell membrane. Functionally, regulates membrane-cell wall junctions and localized cell wall deposition. Required for establishment of the Casparian strip membrane domain (CSD) and the subsequent formation of Casparian strips, a cell wall modification of the root endodermis that determines an apoplastic barrier between the intraorganismal apoplasm and the extraorganismal apoplasm and prevents lateral diffusion. The protein is Casparian strip membrane protein 1 of Cucumis melo (Muskmelon).